The sequence spans 272 residues: MPEFLTVVSWPFLILLSFQIGVAAGAPQPWHCAPCTAERLGLCPPVPASCPEISRPAGCGCCPTCALPMGAACGVATARCAQGLSCRALPGEPRPLHALTRGQGACVPEPAAPATSTLFSSQHEEAKAAVVSADELSESPEMTEEQLLDSFHLMAPSREDQPILWNAISTYSSMRAREIADLKKWKEPCQRELYKVLERLAAAQQKAGDEIYKFYLPNCNKNGFYHSKQCETSLDGEAGLCWCVYPWSGKKIPGSLETRGDPNCHQYFNVHN.

The signal sequence occupies residues 1–25 (MPEFLTVVSWPFLILLSFQIGVAAG). An IGFBP N-terminal domain is found at 28 to 109 (QPWHCAPCTA…TRGQGACVPE (82 aa)). Disulfide bonds link Cys-32–Cys-59, Cys-35–Cys-61, Cys-43–Cys-62, Cys-50–Cys-65, Cys-73–Cys-86, and Cys-80–Cys-106. Phosphoserine occurs at positions 139, 157, and 169. Thr-170 is subject to Phosphothreonine. Tyr-171 is modified (phosphotyrosine). The Thyroglobulin type-1 domain occupies 186–264 (KEPCQRELYK…SLETRGDPNC (79 aa)). 3 cysteine pairs are disulfide-bonded: Cys-189/Cys-219, Cys-230/Cys-241, and Cys-243/Cys-264. Position 255 is a phosphoserine (Ser-255). The short motif at 259-261 (RGD) is the Cell attachment site element.

Binds equally well IGF1 and IGF2. Interacts with integrin ITGA5:ITGB1. Interacts with VHL; this interaction inhibits HIF1A degradation.

It localises to the secreted. Its function is as follows. Multifunctional protein that plays a critical role in regulating the availability of IGFs such as IGF1 and IGF2 to their receptors and thereby regulates IGF-mediated cellular processes including cell migration, proliferation, differentiation or apoptosis in a cell-type specific manner. Also plays a positive role in cell migration by interacting with integrin ITGA5:ITGB1 through its RGD motif. Mechanistically, binding to integrins leads to activation of focal adhesion kinase/PTK2 and stimulation of the mitogen-activated protein kinase (MAPK) pathway. Regulates cardiomyocyte apoptosis by suppressing HIF-1alpha/HIF1A ubiquitination and subsequent degradation. The polypeptide is Insulin-like growth factor-binding protein 1 (Igfbp1) (Mus musculus (Mouse)).